A 186-amino-acid chain; its full sequence is dCTP deaminase (186 aa).

107-112 (KSTYAR) is a dCTP binding site. Glu133 (proton donor/acceptor) is an active-site residue. The dCTP site is built by Gln152, Tyr166, and Gln176.

The protein belongs to the dCTP deaminase family. Homotrimer.

It carries out the reaction dCTP + H2O + H(+) = dUTP + NH4(+). It functions in the pathway pyrimidine metabolism; dUMP biosynthesis; dUMP from dCTP (dUTP route): step 1/2. Functionally, catalyzes the deamination of dCTP to dUTP. In Campylobacter jejuni subsp. jejuni serotype O:6 (strain 81116 / NCTC 11828), this protein is dCTP deaminase.